Reading from the N-terminus, the 628-residue chain is DNA mismatch repair protein MutL (628 aa).

A disordered region spans residues 334-367 (SDFAQPSADNMPKPESPGAPAAHGRKDDAPAAHA). A compositionally biased stretch (basic and acidic residues) spans 357-367 (GRKDDAPAAHA).

This sequence belongs to the DNA mismatch repair MutL/HexB family.

This protein is involved in the repair of mismatches in DNA. It is required for dam-dependent methyl-directed DNA mismatch repair. May act as a 'molecular matchmaker', a protein that promotes the formation of a stable complex between two or more DNA-binding proteins in an ATP-dependent manner without itself being part of a final effector complex. The protein is DNA mismatch repair protein MutL of Opitutus terrae (strain DSM 11246 / JCM 15787 / PB90-1).